The sequence spans 151 residues: UPF0178 protein Swoo_1444 (151 aa).

Belongs to the UPF0178 family.

The polypeptide is UPF0178 protein Swoo_1444 (Shewanella woodyi (strain ATCC 51908 / MS32)).